Reading from the N-terminus, the 162-residue chain is 2-C-methyl-D-erythritol 2,4-cyclodiphosphate synthase (162 aa).

Aspartate 9 and histidine 11 together coordinate a divalent metal cation. 4-CDP-2-C-methyl-D-erythritol 2-phosphate-binding positions include 9-11 (DVH) and 37-38 (HS). A divalent metal cation is bound at residue histidine 45.

It belongs to the IspF family. Homotrimer. A divalent metal cation is required as a cofactor.

It catalyses the reaction 4-CDP-2-C-methyl-D-erythritol 2-phosphate = 2-C-methyl-D-erythritol 2,4-cyclic diphosphate + CMP. Its pathway is isoprenoid biosynthesis; isopentenyl diphosphate biosynthesis via DXP pathway; isopentenyl diphosphate from 1-deoxy-D-xylulose 5-phosphate: step 4/6. Its function is as follows. Involved in the biosynthesis of isopentenyl diphosphate (IPP) and dimethylallyl diphosphate (DMAPP), two major building blocks of isoprenoid compounds. Catalyzes the conversion of 4-diphosphocytidyl-2-C-methyl-D-erythritol 2-phosphate (CDP-ME2P) to 2-C-methyl-D-erythritol 2,4-cyclodiphosphate (ME-CPP) with a corresponding release of cytidine 5-monophosphate (CMP). The protein is 2-C-methyl-D-erythritol 2,4-cyclodiphosphate synthase of Petrotoga mobilis (strain DSM 10674 / SJ95).